Consider the following 545-residue polypeptide: MAKIIAFDEEARRGLERGLNILADAVKVTLGPRGRNVVLEKKWGAPTITNDGVSIAKEIELDDPYEKIGAELVKEVAKKTDDVAGDGTTTATVLAQALVKEGLRNVAAGADPLSLKRGIEKAVEAVTAELLASAKEIETKEEIAATASISAGDDEIGALIAEALDKVGKEGVITVEESNTFGLELELTEGMRFDKGYISAYFVTDAERQETVLEDPYILIVNSKISNVKELVAVLEKVMQSNKPLLIIAEDIEGEALATLIVNKIRGTFKSVAVKAPGFGDRRKAQLADIAILTGGQVISEEVGLKLETAGLELLGKARKVVVTKDETTIVEGAGDADQIAGRVSQIRSEIENSDSDYDREKLQERLAKLAGGVAVIKAGAATEVELKERKHRIEDAVRNAKAAVEEGIVAGGGVALIQAGAKAFANLQLEGDEATGANIVRVAIDAPLKQIAFNAGLEPGVVVDKVRGLPAGHGLNAATGQYVDLLAAGINDPVKVTRSALQNAASIAGLFLTTEAVVADKPEKNAPAMGGGDDMGGMGGMGGF.

ATP contacts are provided by residues 29–32 (TLGP), 86–90 (DGTTT), Gly413, 477–479 (NAA), and Asp493.

This sequence belongs to the chaperonin (HSP60) family. As to quaternary structure, forms a cylinder of 14 subunits composed of two heptameric rings stacked back-to-back. Interacts with the co-chaperonin GroES.

Its subcellular location is the cytoplasm. The enzyme catalyses ATP + H2O + a folded polypeptide = ADP + phosphate + an unfolded polypeptide.. Its function is as follows. Together with its co-chaperonin GroES, plays an essential role in assisting protein folding. The GroEL-GroES system forms a nano-cage that allows encapsulation of the non-native substrate proteins and provides a physical environment optimized to promote and accelerate protein folding. The protein is Chaperonin GroEL 1 of Arthrobacter sp. (strain FB24).